A 103-amino-acid polypeptide reads, in one-letter code: Iron-sulfur cluster assembly protein CyaY (103 aa).

It belongs to the frataxin family.

In terms of biological role, involved in iron-sulfur (Fe-S) cluster assembly. May act as a regulator of Fe-S biogenesis. The chain is Iron-sulfur cluster assembly protein CyaY from Rickettsia peacockii (strain Rustic).